A 374-amino-acid chain; its full sequence is P2Y purinoceptor 11 (374 aa).

The Extracellular segment spans residues 1–29 (MAANVSGAKSCPANFLAAADDKLSGFQGD). N-linked (GlcNAc...) asparagine glycosylation occurs at N4. A helical transmembrane segment spans residues 30–50 (FLWPILVVEFLVAVASNGLAL). Over 51 to 64 (YRFSIRKQRPWHPA) the chain is Cytoplasmic. Residues 65–85 (VVFSVQLAVSDLLCALTLPPL) form a helical membrane-spanning segment. The Extracellular segment spans residues 86–116 (AAYLYPPKHWRYGEAACRLERFLFTCNLLGS). C102 and C180 are disulfide-bonded. A helical transmembrane segment spans residues 117-137 (VIFITCISLNRYLGIVHPFFA). The Cytoplasmic portion of the chain corresponds to 138–146 (RSHLRPKHA). The helical transmembrane segment at 147–167 (WAVSAAGWVLAALLAMPTLSF) threads the bilayer. At 168 to 206 (SHLKRPQQGAGNCSVARPEACIKCLGTADHGLAAYRAYS) the chain is on the extracellular side. The N-linked (GlcNAc...) asparagine glycan is linked to N179. A helical membrane pass occupies residues 207-227 (LVLAGLGCGLPLLLTLAAYGA). Over 228–245 (LGRAVLRSPGMTVAEKLR) the chain is Cytoplasmic. The chain crosses the membrane as a helical span at residues 246 to 266 (VAALVASGVALYASSYVPYHI). The Extracellular segment spans residues 267–308 (MRVLNVDARRRWSTRCPSFADIAQATAALELGPYVGYQVMRG). A helical transmembrane segment spans residues 309–329 (LMPLAFCVHPLLYMAAVPSLG). At 330–374 (CCCRHCPGYRDSWNPEDAKSTGQALPLNATAAPKPSEPQSRELSQ) the chain is on the cytoplasmic side. The disordered stretch occupies residues 345–374 (EDAKSTGQALPLNATAAPKPSEPQSRELSQ).

This sequence belongs to the G-protein coupled receptor 1 family. As to expression, highest expression in liver and spleen.

The protein resides in the cell membrane. Functionally, receptor for ATP and ADP coupled to G-proteins that activate both phosphatidylinositol-calcium and adenylyl cyclase second messenger systems. Not activated by UTP or UDP. This chain is P2Y purinoceptor 11 (P2RY11), found in Homo sapiens (Human).